The primary structure comprises 450 residues: Molybdate-anion transporter (450 aa).

The next 12 helical transmembrane spans lie at 1 to 21 (MLVTAYLAFVGLLASCLGLEL), 43 to 63 (LDFYQVYFLALAADWLQAPYL), 79 to 99 (ILYVCGLASTVLFGLVASSLV), 128 to 148 (FVLLVGRALGGLSTALLFSAF), 174 to 194 (AAFWNHVLAVVAGVAAEAVAS), 195 to 215 (WIGLGPVAPFVAAIPLLALAG), 249 to 269 (VLLLGTIQALFESVIFIFVFL), 278 to 298 (GAPLGIIFSSFMAASLLGSSL), 311 to 331 (PMHLLSLAVLIVVFSLFMLTF), 344 to 364 (FIAFLLIELACGLYFPSMSFL), 376 to 396 (GVLNWFRVPLHSLACLGLLVL), and 409 to 429 (FSICSAVMVMALLAVVGLFTV).

The protein belongs to the major facilitator superfamily. In terms of tissue distribution, expressed ubiquitously but at relatively higher levels in the olfactory bulb and the skeletal muscle.

It localises to the cell membrane. Its function is as follows. Mediates high-affinity intracellular uptake of the rare oligo-element molybdenum. The chain is Molybdate-anion transporter (MFSD5) from Homo sapiens (Human).